Reading from the N-terminus, the 312-residue chain is Ribonuclease Z (312 aa).

Zn(2+) is bound by residues His62, His64, Asp66, His67, His144, Asp215, and His273. Asp66 (proton acceptor) is an active-site residue.

The protein belongs to the RNase Z family. In terms of assembly, homodimer. Zn(2+) serves as cofactor.

It carries out the reaction Endonucleolytic cleavage of RNA, removing extra 3' nucleotides from tRNA precursor, generating 3' termini of tRNAs. A 3'-hydroxy group is left at the tRNA terminus and a 5'-phosphoryl group is left at the trailer molecule.. Its function is as follows. Zinc phosphodiesterase, which displays some tRNA 3'-processing endonuclease activity. Probably involved in tRNA maturation, by removing a 3'-trailer from precursor tRNA. This is Ribonuclease Z from Prochlorococcus marinus (strain MIT 9312).